The sequence spans 179 residues: Large ribosomal subunit protein uL5 (179 aa).

Belongs to the universal ribosomal protein uL5 family. In terms of assembly, part of the 50S ribosomal subunit; part of the 5S rRNA/L5/L18/L25 subcomplex. Contacts the 5S rRNA and the P site tRNA. Forms a bridge to the 30S subunit in the 70S ribosome.

Functionally, this is one of the proteins that bind and probably mediate the attachment of the 5S RNA into the large ribosomal subunit, where it forms part of the central protuberance. In the 70S ribosome it contacts protein S13 of the 30S subunit (bridge B1b), connecting the 2 subunits; this bridge is implicated in subunit movement. Contacts the P site tRNA; the 5S rRNA and some of its associated proteins might help stabilize positioning of ribosome-bound tRNAs. This chain is Large ribosomal subunit protein uL5, found in Stutzerimonas stutzeri (strain A1501) (Pseudomonas stutzeri).